The chain runs to 245 residues: 1-(5-phosphoribosyl)-5-[(5-phosphoribosylamino)methylideneamino] imidazole-4-carboxamide isomerase (245 aa).

Residue Asp-8 is the Proton acceptor of the active site. Asp-130 (proton donor) is an active-site residue.

This sequence belongs to the HisA/HisF family.

The protein localises to the cytoplasm. It catalyses the reaction 1-(5-phospho-beta-D-ribosyl)-5-[(5-phospho-beta-D-ribosylamino)methylideneamino]imidazole-4-carboxamide = 5-[(5-phospho-1-deoxy-D-ribulos-1-ylimino)methylamino]-1-(5-phospho-beta-D-ribosyl)imidazole-4-carboxamide. It participates in amino-acid biosynthesis; L-histidine biosynthesis; L-histidine from 5-phospho-alpha-D-ribose 1-diphosphate: step 4/9. This chain is 1-(5-phosphoribosyl)-5-[(5-phosphoribosylamino)methylideneamino] imidazole-4-carboxamide isomerase, found in Pseudomonas fluorescens (strain Pf0-1).